The chain runs to 426 residues: Probable histidine--tRNA ligase (426 aa).

Belongs to the class-II aminoacyl-tRNA synthetase family. Homodimer.

The protein resides in the cytoplasm. The enzyme catalyses tRNA(His) + L-histidine + ATP = L-histidyl-tRNA(His) + AMP + diphosphate + H(+). In Tropheryma whipplei (strain TW08/27) (Whipple's bacillus), this protein is Probable histidine--tRNA ligase (hisS).